Consider the following 165-residue polypeptide: P2Y purinoceptor 4 (165 aa).

A helical membrane pass occupies residues 1–16; the sequence is SDTLYVLSLPTLVYYY. Over 17–30 the chain is Extracellular; sequence AARNHWPFGTGFCK. A helical transmembrane segment spans residues 31–51; it reads FVRFLFYWNLYCSVLFLTCIS. Residues 52 to 74 lie on the Cytoplasmic side of the membrane; that stretch reads VHRYMGICHPLRALRWGRPRFAS. Residues 75–95 traverse the membrane as a helical segment; sequence LLCLAVWLVVAGCLVPNLFFV. Residues 96–124 are Extracellular-facing; sequence TTSPNGTTILCHDTTRPEEFDHYVHFSSA. Asn100 carries N-linked (GlcNAc...) asparagine glycosylation. A helical transmembrane segment spans residues 125 to 145; sequence VMVLLFGLPFLVTLVCYGLMA. Residues 146 to 165 lie on the Cytoplasmic side of the membrane; the sequence is RRLYRPLPGAGQSSSRLRSL.

It belongs to the G-protein coupled receptor 1 family.

The protein resides in the cell membrane. Its function is as follows. Receptor for UTP and UDP coupled to G-proteins that activate a phosphatidylinositol-calcium second messenger system. The polypeptide is P2Y purinoceptor 4 (P2RY4) (Cricetulus griseus (Chinese hamster)).